The following is a 396-amino-acid chain: Elongation factor Tu (396 aa).

The region spanning 10–206 (KPHCNIGTIG…QVDAYIPQPE (197 aa)) is the tr-type G domain. Positions 19–26 (GHVDHGKT) are G1. 19-26 (GHVDHGKT) serves as a coordination point for GTP. T26 is a Mg(2+) binding site. The segment at 60 to 64 (GITIS) is G2. The interval 81–84 (DCPG) is G3. Residues 81–85 (DCPGH) and 136–139 (NKVD) each bind GTP. The segment at 136–139 (NKVD) is G4. Residues 174 to 176 (SAL) are G5.

This sequence belongs to the TRAFAC class translation factor GTPase superfamily. Classic translation factor GTPase family. EF-Tu/EF-1A subfamily. In terms of assembly, monomer.

The protein resides in the cytoplasm. It catalyses the reaction GTP + H2O = GDP + phosphate + H(+). In terms of biological role, GTP hydrolase that promotes the GTP-dependent binding of aminoacyl-tRNA to the A-site of ribosomes during protein biosynthesis. This Gluconobacter oxydans (strain 621H) (Gluconobacter suboxydans) protein is Elongation factor Tu.